Reading from the N-terminus, the 163-residue chain is Small ribosomal subunit protein uS9 (163 aa).

Residues 1–25 show a composition bias toward low complexity; the sequence is MAENTNNSAVTETEETTAAFTTETN. Residues 1–40 form a disordered region; that stretch reads MAENTNNSAVTETEETTAAFTTETNSGAGTGTSTIAPGYG.

Belongs to the universal ribosomal protein uS9 family.

This chain is Small ribosomal subunit protein uS9, found in Bifidobacterium animalis subsp. lactis (strain AD011).